Here is an 81-residue protein sequence, read N- to C-terminus: Delta-conotoxin PVIA (81 aa).

Positions Met-1–Ala-22 are cleaved as a signal peptide. Positions Asp-23–Asp-49 are excised as a propeptide. Intrachain disulfides connect Cys-54/Cys-69, Cys-61/Cys-73, and Cys-68/Cys-78. Residues Pro-57 and Pro-65 each carry the 4-hydroxyproline modification. Position 80 is a glycine amide; in form delta-conotoxin PVIA (Gly-80).

In terms of processing, the difference between delta-conotoxin PVIA and [deamido]-delta-conotoxin PVIA lies in the state of amidation of Gly-80. As to expression, expressed by the venom duct.

Its subcellular location is the secreted. In terms of biological role, delta-conotoxins bind to site 6 of voltage-gated sodium channels (Nav) and inhibit the inactivation process. This toxin shows weak effects on rNav1.2/SCN2A (EC(50)=2.9 uM), rNav1.4/SCN4A (EC(50)=5.2 uM), hNav1.7/SCN9A (EC(50)=1.9 uM) and rNav1.7/SCN9A (EC(50)=6.4 uM). In vivo, this toxin shows different effects. In mice, injection of this toxin causes hyperactivity, rapid running, limb extension, and death. In fish, the peptide elicites spurts of rapid swimming, with twisted motions, quivering fins and the lockjaw extended mouth syndrome. Rigid paralysis and death are observed at higher doses. In mollusks, this peptide is inactive. Injection of this peptide together with the kappa-conotoxin PVIIA causes the sudden tetanus of prey (STOP) syndrome, which is a single, lethal 'fin-pop' in envenomed fish. The polypeptide is Delta-conotoxin PVIA (Conus purpurascens (Purple cone)).